The following is a 123-amino-acid chain: Large ribosomal subunit protein bL12 (123 aa).

Belongs to the bacterial ribosomal protein bL12 family. Homodimer. Part of the ribosomal stalk of the 50S ribosomal subunit. Forms a multimeric L10(L12)X complex, where L10 forms an elongated spine to which 2 to 4 L12 dimers bind in a sequential fashion. Binds GTP-bound translation factors.

Its function is as follows. Forms part of the ribosomal stalk which helps the ribosome interact with GTP-bound translation factors. Is thus essential for accurate translation. The polypeptide is Large ribosomal subunit protein bL12 (Mycoplasmopsis agalactiae (strain NCTC 10123 / CIP 59.7 / PG2) (Mycoplasma agalactiae)).